The chain runs to 450 residues: Phosphoglucosamine mutase (450 aa).

Ser-101 acts as the Phosphoserine intermediate in catalysis. 4 residues coordinate Mg(2+): Ser-101, Asp-243, Asp-245, and Asp-247. Ser-101 carries the phosphoserine modification.

The protein belongs to the phosphohexose mutase family. The cofactor is Mg(2+). Post-translationally, activated by phosphorylation.

The catalysed reaction is alpha-D-glucosamine 1-phosphate = D-glucosamine 6-phosphate. Catalyzes the conversion of glucosamine-6-phosphate to glucosamine-1-phosphate. The sequence is that of Phosphoglucosamine mutase from Desulfotalea psychrophila (strain LSv54 / DSM 12343).